A 353-amino-acid polypeptide reads, in one-letter code: Thiamine-phosphate synthase (353 aa).

Residues 1–128 form a unknown region; that stretch reads MKSMPFAPIA…AASAAAIRYG (128 aa). The segment at 129 to 353 is thiamine-phosphate synthase; sequence LYDLEVTVLQ…TSLQLLEALR (225 aa). 4-amino-2-methyl-5-(diphosphooxymethyl)pyrimidine is bound by residues 185-189 and asparagine 217; that span reads QYRNK. Mg(2+) is bound by residues aspartate 218 and aspartate 237. Position 256 (serine 256) interacts with 4-amino-2-methyl-5-(diphosphooxymethyl)pyrimidine. Residue 282–284 participates in 2-[(2R,5Z)-2-carboxy-4-methylthiazol-5(2H)-ylidene]ethyl phosphate binding; sequence TAT. Residue lysine 285 coordinates 4-amino-2-methyl-5-(diphosphooxymethyl)pyrimidine. Glycine 312 is a 2-[(2R,5Z)-2-carboxy-4-methylthiazol-5(2H)-ylidene]ethyl phosphate binding site.

Belongs to the thiamine-phosphate synthase family. Mg(2+) is required as a cofactor.

It catalyses the reaction 2-[(2R,5Z)-2-carboxy-4-methylthiazol-5(2H)-ylidene]ethyl phosphate + 4-amino-2-methyl-5-(diphosphooxymethyl)pyrimidine + 2 H(+) = thiamine phosphate + CO2 + diphosphate. The enzyme catalyses 2-(2-carboxy-4-methylthiazol-5-yl)ethyl phosphate + 4-amino-2-methyl-5-(diphosphooxymethyl)pyrimidine + 2 H(+) = thiamine phosphate + CO2 + diphosphate. The catalysed reaction is 4-methyl-5-(2-phosphooxyethyl)-thiazole + 4-amino-2-methyl-5-(diphosphooxymethyl)pyrimidine + H(+) = thiamine phosphate + diphosphate. Its pathway is cofactor biosynthesis; thiamine diphosphate biosynthesis; thiamine phosphate from 4-amino-2-methyl-5-diphosphomethylpyrimidine and 4-methyl-5-(2-phosphoethyl)-thiazole: step 1/1. Condenses 4-methyl-5-(beta-hydroxyethyl)thiazole monophosphate (THZ-P) and 2-methyl-4-amino-5-hydroxymethyl pyrimidine pyrophosphate (HMP-PP) to form thiamine monophosphate (TMP). The protein is Thiamine-phosphate synthase of Prochlorococcus marinus (strain MIT 9313).